We begin with the raw amino-acid sequence, 373 residues long: Deoxyguanosinetriphosphate triphosphohydrolase-like protein 1 (373 aa).

The segment at 21-43 (RSSEARRAVPEAPSETRTAYQKD) is disordered. The HD domain maps to 76–198 (RLTHTLEVQQ…VDAADALAYT (123 aa)).

Belongs to the dGTPase family. Type 2 subfamily.

This is Deoxyguanosinetriphosphate triphosphohydrolase-like protein 1 from Deinococcus radiodurans (strain ATCC 13939 / DSM 20539 / JCM 16871 / CCUG 27074 / LMG 4051 / NBRC 15346 / NCIMB 9279 / VKM B-1422 / R1).